Reading from the N-terminus, the 324-residue chain is Probable pectinesterase A (324 aa).

Positions 1–19 are cleaved as a signal peptide; the sequence is MYLPSLVLGLLGFGLTAST. An N-linked (GlcNAc...) asparagine glycan is attached at N27. A substrate-binding site is contributed by Q142. The active-site Proton donor is D165. The active-site Nucleophile is the D186. Residues R246 and W248 each contribute to the substrate site.

It belongs to the pectinesterase family.

The protein resides in the secreted. It catalyses the reaction [(1-&gt;4)-alpha-D-galacturonosyl methyl ester](n) + n H2O = [(1-&gt;4)-alpha-D-galacturonosyl](n) + n methanol + n H(+). The protein operates within glycan metabolism; pectin degradation; 2-dehydro-3-deoxy-D-gluconate from pectin: step 1/5. In terms of biological role, involved in maceration and soft-rotting of plant tissue. The protein is Probable pectinesterase A (pmeA) of Aspergillus fumigatus (strain CBS 144.89 / FGSC A1163 / CEA10) (Neosartorya fumigata).